Consider the following 151-residue polypeptide: Small ribosomal subunit protein uS15 (151 aa).

The residue at position 27 (lysine 27) is an N6-acetyllysine; alternate. Lysine 27 is subject to N6-succinyllysine; alternate. Lysine 27 participates in a covalent cross-link: Glycyl lysine isopeptide (Lys-Gly) (interchain with G-Cter in ubiquitin). Phosphoserine is present on serine 30. The residue at position 34 (lysine 34) is an N6-succinyllysine. Residue tyrosine 38 is modified to Phosphotyrosine. Residue lysine 43 forms a Glycyl lysine isopeptide (Lys-Gly) (interchain with G-Cter in SUMO2) linkage.

This sequence belongs to the universal ribosomal protein uS15 family. Component of the small ribosomal subunit. Part of the small subunit (SSU) processome, composed of more than 70 proteins and the RNA chaperone small nucleolar RNA (snoRNA) U3. In terms of processing, ubiquitinated at Lys-27 by RNF14 and RNF25 in response to ribosome collisions (ribosome stalling).

It is found in the cytoplasm. The protein resides in the nucleus. It localises to the nucleolus. Component of the small ribosomal subunit. The ribosome is a large ribonucleoprotein complex responsible for the synthesis of proteins in the cell. Part of the small subunit (SSU) processome, first precursor of the small eukaryotic ribosomal subunit. During the assembly of the SSU processome in the nucleolus, many ribosome biogenesis factors, an RNA chaperone and ribosomal proteins associate with the nascent pre-rRNA and work in concert to generate RNA folding, modifications, rearrangements and cleavage as well as targeted degradation of pre-ribosomal RNA by the RNA exosome. This is Small ribosomal subunit protein uS15 (RPS13) from Cricetulus griseus (Chinese hamster).